We begin with the raw amino-acid sequence, 295 residues long: sn-glycerol-3-phosphate transport system permease protein UgpA (295 aa).

Over 1-11 (MSSSRPVFRSR) the chain is Cytoplasmic. A helical transmembrane segment spans residues 12–32 (WLPYLLVAPQLVITVIFFIWP). At 33–80 (AGEALWYSLQSVDPFGFSSQFVGLENFVALFHDSYYLDAFWTTIKFSA) the chain is on the periplasmic side. The ABC transmembrane type-1 domain occupies 76–284 (IKFSALVTFS…FLVIILTVVQ (209 aa)). A helical membrane pass occupies residues 81-101 (LVTFSGLLVSLFFAALVDYVV). Residues 102–109 (RGSRFYQT) are Cytoplasmic-facing. A helical membrane pass occupies residues 110–130 (LMLLPYAVAPAVAAVLWIFLF). Residues 131–157 (NPGRGLITHFLGEFGYDWNHAQNSGQA) lie on the Periplasmic side of the membrane. Residues 158-178 (MFLVVFASVWKQISYNFLFFF) form a helical membrane-spanning segment. The Cytoplasmic segment spans residues 179–207 (AALQSIPRSLVEAAAIDGAGPIRRFFRLS). Residues 208-228 (LPLIAPVSFFLLVVNLVYAFF) form a helical membrane-spanning segment. Residues 229-262 (DTFPVIDAATAGGPVQATTTLIYKIYREGFTGLD) lie on the Periplasmic side of the membrane. A helical transmembrane segment spans residues 263–283 (LSASAAQSVVLMFLVIILTVV). Topologically, residues 284–295 (QFRYVESKVRYQ) are cytoplasmic.

This sequence belongs to the binding-protein-dependent transport system permease family. UgpAE subfamily. The complex is composed of two ATP-binding proteins (UgpC), two transmembrane proteins (UgpA and UgpE) and a solute-binding protein (UgpB).

The protein localises to the cell inner membrane. In terms of biological role, part of the ABC transporter complex UgpBAEC involved in sn-glycerol-3-phosphate (G3P) import. Probably responsible for the translocation of the substrate across the membrane. This Salmonella typhimurium (strain LT2 / SGSC1412 / ATCC 700720) protein is sn-glycerol-3-phosphate transport system permease protein UgpA (ugpA).